A 1144-amino-acid chain; its full sequence is MASSSSSSRWSYDVFLSFRGEDTRKTFTSHLYEVLNDKGIKTFQDDKRLEYGATIPGELCKAIEESQFAIVVFSENYATSRWCLNELVKIMECKTRFKQTVIPIFYDVDPSHVRNQKESFAKAFEEHETKYKDDVEGIQRWRIALNEAANLKGSCDNRDKTDADCIRQIVDQISSKLCKISLSYLQNIVGIDTHLEKIESLLEIGINGVRIMGIWGMGGVGKTTIARAIFDTLLGRMDSSYQFDGACFLKDIKENKRGMHSLQNALLSELLREKANYNNEEDGKHQMASRLRSKKVLIVLDDIDNKDHYLEYLAGDLDWFGNGSRIIITTRDKHLIEKNDIIYEVTALPDHESIQLFKQHAFGKEVPNENFEKLSLEVVNYAKGLPLALKVWGSLLHNLRLTEWKSAIEHMKNNSYSGIIDKLKISYDGLEPKQQEMFLDIACFLRGEEKDYILQILESCHIGAEYGLRILIDKSLVFISEYNQVQMHDLIQDMGKYIVNFQKDPGERSRLWLAKEVEEVMSNNTGTMAMEAIWVSSYSSTLRFSNQAVKNMKRLRVFNMGRSSTHYAIDYLPNNLRCFVCTNYPWESFPSTFELKMLVHLQLRHNSLRHLWTETKHLPSLRRIDLSWSKRLTRTPDFTGMPNLEYVNLYQCSNLEEVHHSLGCCSKVIGLYLNDCKSLKRFPCVNVESLEYLGLRSCDSLEKLPEIYGRMKPEIQIHMQGSGIRELPSSIFQYKTHVTKLLLWNMKNLVALPSSICRLKSLVSLSVSGCSKLESLPEEIGDLDNLRVFDASDTLILRPPSSIIRLNKLIILMFRGFKDGVHFEFPPVAEGLHSLEYLNLSYCNLIDGGLPEEIGSLSSLKKLDLSRNNFEHLPSSIAQLGALQSLDLKDCQRLTQLPELPPELNELHVDCHMALKFIHYLVTKRKKLHRVKLDDAHNDTMYNLFAYTMFQNISSMRHDISASDSLSLTVFTGQPYPEKIPSWFHHQGWDSSVSVNLPENWYIPDKFLGFAVCYSRSLIDTTAHLIPVCDDKMSRMTQKLALSECDTESSNYSEWDIHFFFVPFAGLWDTSKANGKTPNDYGIIRLSFSGEEKMYGLRLLYKEGPEVNALLQMRENSNEPTEHSTGIRRTQYNNRTSFYELING.

Positions 10 to 177 (WSYDVFLSFR…QIVDQISSKL (168 aa)) constitute a TIR domain. Glu-86 is an active-site residue. The NB-ARC domain occupies 172-447 (QISSKLCKIS…FLDIACFLRG (276 aa)). Position 216 to 223 (216 to 223 (GMGGVGKT)) interacts with ATP. LRR repeat units lie at residues 597-618 (MLVH…TKHL), 620-642 (SLRR…TGMP), 643-665 (NLEY…LGCC), 834-854 (SLEY…PEEI), 859-880 (SLKK…IAQL), and 882-904 (ALQS…PPEL).

The protein belongs to the disease resistance NB-LRR family.

It localises to the cytoplasm. The enzyme catalyses NAD(+) + H2O = ADP-D-ribose + nicotinamide + H(+). Functionally, disease resistance protein. Resistance proteins guard the plant against pathogens that contain an appropriate avirulence protein via a direct or indirect interaction with this avirulence protein. That triggers a defense system including the hypersensitive response, which restricts the pathogen growth. This is TMV resistance protein N (N) from Nicotiana glutinosa (Tobacco).